Here is a 144-residue protein sequence, read N- to C-terminus: Deoxyuridine 5'-triphosphate nucleotidohydrolase (144 aa).

Residues S66, R133, F138, and G139 each coordinate dUMP.

The protein belongs to the dUTPase family. In terms of assembly, homotrimer. Mg(2+) is required as a cofactor.

It carries out the reaction dUTP + H2O = dUMP + diphosphate + H(+). It functions in the pathway pyrimidine metabolism; dUMP biosynthesis; dUMP from dCTP (dUTP route): step 2/2. Its function is as follows. Involved in nucleotide metabolism via production of dUMP, the immediate precursor of thymidine nucleotides, and decreases the intracellular concentration of dUTP so that uracil cannot be incorporated into DNA. The sequence is that of Deoxyuridine 5'-triphosphate nucleotidohydrolase (DUT1) from Encephalitozoon cuniculi (strain GB-M1) (Microsporidian parasite).